Reading from the N-terminus, the 419-residue chain is UDP-N-acetylmuramoylalanine--D-glutamate ligase (419 aa).

Gly109–Thr115 provides a ligand contact to ATP.

It belongs to the MurCDEF family.

It localises to the cytoplasm. The catalysed reaction is UDP-N-acetyl-alpha-D-muramoyl-L-alanine + D-glutamate + ATP = UDP-N-acetyl-alpha-D-muramoyl-L-alanyl-D-glutamate + ADP + phosphate + H(+). Its pathway is cell wall biogenesis; peptidoglycan biosynthesis. Functionally, cell wall formation. Catalyzes the addition of glutamate to the nucleotide precursor UDP-N-acetylmuramoyl-L-alanine (UMA). The chain is UDP-N-acetylmuramoylalanine--D-glutamate ligase from Chlamydia felis (strain Fe/C-56) (Chlamydophila felis).